Consider the following 547-residue polypeptide: Phospholipase DDHD1 (547 aa).

The active site involves Ser-184. The 276-residue stretch at 258–533 folds into the DDHD domain; sequence LKFKVENFFC…ALFLLTFMYK (276 aa). Ser-370 is subject to Phosphoserine. The segment at 414 to 448 is disordered; sequence RSSASQPSEPSKDSLEDDKKPSASPSTTTVATQTL. Over residues 423-434 the composition is skewed to basic and acidic residues; sequence PSKDSLEDDKKP. Positions 435 to 448 are enriched in low complexity; that stretch reads SASPSTTTVATQTL.

It belongs to the PA-PLA1 family. As to quaternary structure, forms homooligomers and, to a much smaller extent, heterooligomers with DDHD2. Interacts with SEC23A and SEC24C. In terms of tissue distribution, predominantly expressed in testis, in round and elongating spermatids, but not in spermatocytes (at protein level). Also expressed in the brain, and at lower levels in other tissues such as thymus and lung (at protein level).

It is found in the cytoplasm. The enzyme catalyses a 1,2-diacyl-sn-glycero-3-phosphate + H2O = a 2-acyl-sn-glycerol 3-phosphate + a fatty acid + H(+). It carries out the reaction a 1,2-diacyl-sn-glycero-3-phospho-(1D-myo-inositol) + H2O = a 2-acyl-sn-glycero-3-phospho-D-myo-inositol + a fatty acid + H(+). It catalyses the reaction 1-octadecanoyl-2-(5Z,8Z,11Z,14Z-eicosatetraenoyl)-sn-glycero-3-phospho-(1D-myo-inositol) + H2O = 2-(5Z,8Z,11Z,14Z-eicosatetraenoyl)-sn-glycero-3-phospho-(1D-myo-inositol) + octadecanoate + H(+). The catalysed reaction is a 1-acyl-2-(5Z,8Z,11Z,14Z-eicosatetraenoyl)-sn-glycero-3-phospho-(1D-myo-inositol) + H2O = 2-(5Z,8Z,11Z,14Z-eicosatetraenoyl)-sn-glycero-3-phospho-(1D-myo-inositol) + a fatty acid + H(+). The enzyme catalyses 1,2-dihexadecanoyl-sn-glycero-3-phospho-(1D-myo-inositol) + H2O = 2-hexadecanoyl-sn-glycero-3-phospho-(1D-myo-inositol) + hexadecanoate + H(+). It carries out the reaction a 1-acyl-2-(5Z,8Z,11Z,14Z)-eicosatetraenoyl-sn-glycero-3-phosphate + H2O = 2-(5Z,8Z,11Z,14Z-eicosatetraenoyl)-sn-glycero-3-phosphate + a fatty acid + H(+). It catalyses the reaction 1-(9Z-octadecenoyl)-2-(7Z,10Z,13Z,16Z,19Z-docosapentaenoyl)-sn-glycero-3-phospho-1D-myo-inositol + H2O = 2-(7Z,10Z,13Z,16Z,19Z-docosapentaenoyl)-sn-glycero-3-phospho-1D-myo-inositol + (9Z)-octadecenoate + H(+). The catalysed reaction is 1-(9Z-octadecenoyl)-2-(5Z,8Z,11Z,14Z-eicosatetraenoyl)-sn-glycero-3-phospho-1D-myo-inositol + H2O = 2-(5Z,8Z,11Z,14Z-eicosatetraenoyl)-sn-glycero-3-phospho-(1D-myo-inositol) + (9Z)-octadecenoate + H(+). The enzyme catalyses 1,2-di-(9Z-octadecenoyl)-sn-glycero-3-phospho-1D-myo-inositol + H2O = 2-(9Z-octadecenoyl)-sn-glycero-3-phospho-1D-myo-inositol + (9Z)-octadecenoate + H(+). It carries out the reaction 1-(9Z-octadecenoyl)-2-(8Z,11Z,14Z-eicosatrienoyl)-sn-glycero-3-phospho-1D-myo-inositol + H2O = 2-(8Z,11Z,14Z-eicosatrienoyl)-sn-glycero-3-phospho-1D-myo-inositol + (9Z)-octadecenoate + H(+). It catalyses the reaction 1,2-di-(9Z-octadecenoyl)-sn-glycero-3-phosphate + H2O = 2-(9Z-octadecenoyl)-sn-glycero-3-phosphate + (9Z)-octadecenoate + H(+). The catalysed reaction is 1-hexadecanoyl-2-(9Z-octadecenoyl)-sn-glycero-3-phosphate + H2O = 2-(9Z-octadecenoyl)-sn-glycero-3-phosphate + hexadecanoate + H(+). The enzyme catalyses 1-hexadecanoyl-2-(9Z-octadecenoyl)-sn-glycero-3-phospho-L-serine + H2O = 2-(9Z-octadecenoyl)-sn-glycero-3-phospho-L-serine + hexadecanoate + H(+). It carries out the reaction 1,2-di-(5Z,8Z,11Z,14Z)-eicosatetraenoyl-sn-glycero-3-phosphate + H2O = 2-(5Z,8Z,11Z,14Z-eicosatetraenoyl)-sn-glycero-3-phosphate + (5Z,8Z,11Z,14Z)-eicosatetraenoate + H(+). It catalyses the reaction 1-octadecanoyl-2-(5Z,8Z,11Z,14Z-eicosatetraenoyl)-sn-glycero-3-phosphate + H2O = 2-(5Z,8Z,11Z,14Z-eicosatetraenoyl)-sn-glycero-3-phosphate + octadecanoate + H(+). The catalysed reaction is a 1,2-diacyl-sn-glycero-3-phospho-L-serine + H2O = a 2-acyl-sn-glycero-3-phospho-L-serine + a fatty acid + H(+). The enzyme catalyses a 1,2-diacyl-sn-glycero-3-phosphocholine + H2O = a 2-acyl-sn-glycero-3-phosphocholine + a fatty acid + H(+). It carries out the reaction 1,2-di-(9Z-octadecenoyl)-sn-glycero-3-phosphocholine + H2O = (9Z-octadecenoyl)-sn-glycero-3-phosphocholine + (9Z)-octadecenoate + H(+). It catalyses the reaction a 1,2-diacyl-sn-glycero-3-phosphoethanolamine + H2O = a 2-acyl-sn-glycero-3-phosphoethanolamine + a fatty acid + H(+). The catalysed reaction is a 1,2-diacyl-sn-glycero-3-phospho-(1'-sn-glycerol) + H2O = 2-acyl-sn-glycero-3-phospho-(1'-sn-glycerol) + a fatty acid + H(+). The enzyme catalyses 1-hexadecanoyl-2-(9Z-octadecenoyl)-sn-glycero-3-phospho-(1'-sn-glycerol) + H2O = 2-(9Z-octadecenoyl)-sn-glycero-3-phospho-(1'-sn-glycerol) + hexadecanoate + H(+). It carries out the reaction 1-acyl-2-(5Z,8Z,11Z,14Z-eicosatetraenoyl)-sn-glycero-3-phosphocholine + H2O = 2-(5Z,8Z,11Z,14Z)-eicosatetraenoyl-sn-glycero-3-phosphocholine + a fatty acid + H(+). It catalyses the reaction 1-acyl-2-(5Z,8Z,11Z,14Z)-eicosatetraenoyl-sn-glycero-3-phosphoethanolamine + H2O = 2-(5Z,8Z,11Z,14Z)-eicosatetraenoyl-sn-glycero-3-phosphoethanolamine + a fatty acid + H(+). Its pathway is phospholipid metabolism; phosphatidylinositol metabolism. Its function is as follows. Phospholipase A1 (PLA1) that hydrolyzes ester bonds at the sn-1 position of glycerophospholipids producing a free fatty acid and a lysophospholipid. Prefers phosphatidate (1,2-diacyl-sn-glycero-3-phosphate, PA) as substrate in vitro, but can efficiently hydrolyze phosphatidylinositol (1,2-diacyl-sn-glycero-3-phospho-(1D-myo-inositol), PI), as well as a range of other glycerophospholipid substrates such as phosphatidylcholine (1,2-diacyl-sn-glycero-3-phosphocholine, PC), phosphatidylethanolamine (1,2-diacyl-sn-glycero-3-phosphoethanolamine, PE), phosphatidylserine (1,2-diacyl-sn-glycero-3-phospho-L-serine, PS) and phosphatidylglycerol (1,2-diacyl-sn-glycero-3-phospho-(1'-sn-glycerol), PG). Involved in the regulation of the endogenous content of polyunsaturated PI and PS lipids in the nervous system. Changes in these lipids extend to downstream metabolic products like PI phosphates PIP and PIP2, which play fundamental roles in cell biology. Regulates mitochondrial morphology. These dynamic changes may be due to PA hydrolysis at the mitochondrial surface. May play a regulatory role in spermatogenesis or sperm function. The sequence is that of Phospholipase DDHD1 from Mus musculus (Mouse).